The primary structure comprises 283 residues: NADPH-dependent 7-cyano-7-deazaguanine reductase (283 aa).

Residue 90 to 92 (IES) participates in substrate binding. Position 92-93 (92-93 (SK)) interacts with NADPH. Cys191 functions as the Thioimide intermediate in the catalytic mechanism. The active-site Proton donor is the Asp198. 230 to 231 (HE) serves as a coordination point for substrate. 259 to 260 (RG) lines the NADPH pocket.

It belongs to the GTP cyclohydrolase I family. QueF type 2 subfamily. As to quaternary structure, homodimer.

Its subcellular location is the cytoplasm. It carries out the reaction 7-aminomethyl-7-carbaguanine + 2 NADP(+) = 7-cyano-7-deazaguanine + 2 NADPH + 3 H(+). It functions in the pathway tRNA modification; tRNA-queuosine biosynthesis. Functionally, catalyzes the NADPH-dependent reduction of 7-cyano-7-deazaguanine (preQ0) to 7-aminomethyl-7-deazaguanine (preQ1). In Tolumonas auensis (strain DSM 9187 / NBRC 110442 / TA 4), this protein is NADPH-dependent 7-cyano-7-deazaguanine reductase.